Consider the following 193-residue polypeptide: Bifunctional protein PyrR (193 aa).

Residues 48 to 49 (TR), Arg-89, Arg-93, 110 to 118 (DDVLFSGRT), Arg-143, and Val-167 contribute to the substrate site. Positions 106–118 (VVLVDDVLFSGRT) match the PRPP-binding motif.

It belongs to the purine/pyrimidine phosphoribosyltransferase family. PyrR subfamily.

The enzyme catalyses UMP + diphosphate = 5-phospho-alpha-D-ribose 1-diphosphate + uracil. In terms of biological role, regulates the transcription of the pyrimidine nucleotide (pyr) operon in response to exogenous pyrimidines. Also displays a weak uracil phosphoribosyltransferase activity which is not physiologically significant. The chain is Bifunctional protein PyrR from Streptomyces coelicolor (strain ATCC BAA-471 / A3(2) / M145).